A 137-amino-acid chain; its full sequence is Ribosome-binding factor A (137 aa).

Belongs to the RbfA family. Monomer. Binds 30S ribosomal subunits, but not 50S ribosomal subunits or 70S ribosomes.

Its subcellular location is the cytoplasm. Functionally, one of several proteins that assist in the late maturation steps of the functional core of the 30S ribosomal subunit. Associates with free 30S ribosomal subunits (but not with 30S subunits that are part of 70S ribosomes or polysomes). Required for efficient processing of 16S rRNA. May interact with the 5'-terminal helix region of 16S rRNA. The chain is Ribosome-binding factor A from Trichodesmium erythraeum (strain IMS101).